Here is a 66-residue protein sequence, read N- to C-terminus: Large ribosomal subunit protein bL35 (66 aa).

The protein belongs to the bacterial ribosomal protein bL35 family.

In Caulobacter vibrioides (strain ATCC 19089 / CIP 103742 / CB 15) (Caulobacter crescentus), this protein is Large ribosomal subunit protein bL35.